Consider the following 496-residue polypeptide: Galactan beta-1,4-galactosyltransferase GALS1 (496 aa).

The helical transmembrane segment at Ile-22–Tyr-42 threads the bilayer. A GT92 domain is found at Asp-232–Lys-464.

The protein belongs to the glycosyltransferase 92 family. As to expression, expressed in root vasculature, mature leaves, trichomes, flowers, siliques and seeds.

The protein localises to the golgi apparatus membrane. In terms of biological role, involved in the biosynthesis of beta-1,4-galactan. Can transfer galactose residues from UDP-galactose to beta-1,4-galactopentaose in vitro. Forms specifically beta-1,4-galactosyl linkages and can add successive beta-1,4-galactosyl residues to the acceptor. Beta-1,4-galactans are abundant polysaccharides in plant cell walls and are found as side-chain of rhamnogalacturonan I, which is a major component of pectin. The polypeptide is Galactan beta-1,4-galactosyltransferase GALS1 (Arabidopsis thaliana (Mouse-ear cress)).